We begin with the raw amino-acid sequence, 107 residues long: UPF0145 protein ECA2666 (107 aa).

This sequence belongs to the UPF0145 family.

This chain is UPF0145 protein ECA2666, found in Pectobacterium atrosepticum (strain SCRI 1043 / ATCC BAA-672) (Erwinia carotovora subsp. atroseptica).